Reading from the N-terminus, the 161-residue chain is Cell wall protein YLR042C (161 aa).

Residues 1 to 24 (MKISQFGSLAFAPIVLLQLFIVQA) form the signal peptide. N-linked (GlcNAc...) asparagine glycans are attached at residues Asn-77, Asn-104, and Asn-120. Residues 111–139 (FTPLPSSSRNETKSSQTTNTISSSTSTGG) form a disordered region. A compositionally biased stretch (low complexity) spans 123 to 137 (KSSQTTNTISSSTST). The GPI-anchor amidated glycine moiety is linked to residue Gly-139. The propeptide at 140 to 161 (VGSVKPCLYFVLMLETIAYLFS) is removed in mature form.

Post-translationally, the GPI-anchor is attached to the protein in the endoplasmic reticulum and serves to target the protein to the cell surface. There, the glucosamine-inositol phospholipid moiety is cleaved off and the GPI-modified mannoprotein is covalently attached via its lipidless GPI glycan remnant to the 1,6-beta-glucan of the outer cell wall layer.

The protein localises to the secreted. Its subcellular location is the cell wall. The protein resides in the membrane. The sequence is that of Cell wall protein YLR042C from Saccharomyces cerevisiae (strain ATCC 204508 / S288c) (Baker's yeast).